The following is a 426-amino-acid chain: D-tagatose-1,6-bisphosphate aldolase subunit KbaZ (426 aa).

It belongs to the GatZ/KbaZ family. KbaZ subfamily. In terms of assembly, forms a complex with KbaY.

It participates in carbohydrate metabolism; D-tagatose 6-phosphate degradation; D-glyceraldehyde 3-phosphate and glycerone phosphate from D-tagatose 6-phosphate: step 2/2. Functionally, component of the tagatose-1,6-bisphosphate aldolase KbaYZ that is required for full activity and stability of the Y subunit. Could have a chaperone-like function for the proper and stable folding of KbaY. When expressed alone, KbaZ does not show any aldolase activity. This is D-tagatose-1,6-bisphosphate aldolase subunit KbaZ from Escherichia coli (strain K12 / MC4100 / BW2952).